The following is a 443-amino-acid chain: UDP-N-acetylmuramate--L-alanine ligase (443 aa).

Residue 110 to 116 participates in ATP binding; that stretch reads GAHGKTS.

It belongs to the MurCDEF family.

It localises to the cytoplasm. The catalysed reaction is UDP-N-acetyl-alpha-D-muramate + L-alanine + ATP = UDP-N-acetyl-alpha-D-muramoyl-L-alanine + ADP + phosphate + H(+). Its pathway is cell wall biogenesis; peptidoglycan biosynthesis. Functionally, cell wall formation. This Streptococcus equi subsp. zooepidemicus (strain MGCS10565) protein is UDP-N-acetylmuramate--L-alanine ligase.